A 203-amino-acid polypeptide reads, in one-letter code: 3-isopropylmalate dehydratase small subunit (203 aa).

The protein belongs to the LeuD family. LeuD type 1 subfamily. Heterodimer of LeuC and LeuD.

It catalyses the reaction (2R,3S)-3-isopropylmalate = (2S)-2-isopropylmalate. It participates in amino-acid biosynthesis; L-leucine biosynthesis; L-leucine from 3-methyl-2-oxobutanoate: step 2/4. Catalyzes the isomerization between 2-isopropylmalate and 3-isopropylmalate, via the formation of 2-isopropylmaleate. This is 3-isopropylmalate dehydratase small subunit from Phenylobacterium zucineum (strain HLK1).